Here is a 428-residue protein sequence, read N- to C-terminus: D-amino acid dehydrogenase (428 aa).

3 to 17 serves as a coordination point for FAD; it reads VVILGSGVVGVASAY.

This sequence belongs to the DadA oxidoreductase family. The cofactor is FAD.

The catalysed reaction is a D-alpha-amino acid + A + H2O = a 2-oxocarboxylate + AH2 + NH4(+). It participates in amino-acid degradation; D-alanine degradation; NH(3) and pyruvate from D-alanine: step 1/1. In terms of biological role, oxidative deamination of D-amino acids. The sequence is that of D-amino acid dehydrogenase from Burkholderia multivorans (strain ATCC 17616 / 249).